A 472-amino-acid polypeptide reads, in one-letter code: ATP synthase subunit beta (472 aa).

An ATP-binding site is contributed by glycine 157 to threonine 164.

The protein belongs to the ATPase alpha/beta chains family. F-type ATPases have 2 components, CF(1) - the catalytic core - and CF(0) - the membrane proton channel. CF(1) has five subunits: alpha(3), beta(3), gamma(1), delta(1), epsilon(1). CF(0) has three main subunits: a(1), b(2) and c(9-12). The alpha and beta chains form an alternating ring which encloses part of the gamma chain. CF(1) is attached to CF(0) by a central stalk formed by the gamma and epsilon chains, while a peripheral stalk is formed by the delta and b chains.

It is found in the cell membrane. It carries out the reaction ATP + H2O + 4 H(+)(in) = ADP + phosphate + 5 H(+)(out). In terms of biological role, produces ATP from ADP in the presence of a proton gradient across the membrane. The catalytic sites are hosted primarily by the beta subunits. The chain is ATP synthase subunit beta from Desulforudis audaxviator (strain MP104C).